The chain runs to 406 residues: Argininosuccinate synthase (406 aa).

ATP contacts are provided by residues 13 to 21 (AYSGGLDTS) and A40. L-citrulline-binding residues include Y91 and S96. G121 contributes to the ATP binding site. T123, N127, and D128 together coordinate L-aspartate. L-citrulline is bound at residue N127. Residues R131, S182, S191, E267, and Y279 each contribute to the L-citrulline site.

It belongs to the argininosuccinate synthase family. Type 1 subfamily. Homotetramer.

It localises to the cytoplasm. The enzyme catalyses L-citrulline + L-aspartate + ATP = 2-(N(omega)-L-arginino)succinate + AMP + diphosphate + H(+). Its pathway is amino-acid biosynthesis; L-arginine biosynthesis; L-arginine from L-ornithine and carbamoyl phosphate: step 2/3. This Brucella abortus (strain S19) protein is Argininosuccinate synthase.